Here is a 121-residue protein sequence, read N- to C-terminus: uncharacterized protein (121 aa).

Residues 7 to 121 form the HIT domain; it reads IFCKIVRGEV…GGREMSWPPG (115 aa). The Histidine triad motif signature appears at 105–109; the sequence is HLHLH.

This is an uncharacterized protein from Aquifex aeolicus (strain VF5).